A 2201-amino-acid polypeptide reads, in one-letter code: MGAMTQLLAGVFLAFLALATEGGVLKKVIRHKRQSGVNATLPEENQPVVFNHVYNIKLPVGSQCSVDLESASGEKDLAPPSEPSESFQEHTVDGENQIVFTHRINIPRRACGCAAAPDVKELLSRLEELENLVSSLREQCTAGAGCCLQPATGRLDTRPFCSGRGNFSTEGCGCVCEPGWKGPNCSEPECPGNCHLRGRCIDGQCICDDGFTGEDCSQLACPSDCNDQGKCVNGVCICFEGYAGADCSREICPVPCSEEHGTCVDGLCVCHDGFAGDDCNKPLCLNNCYNRGRCVENECVCDEGFTGEDCSELICPNDCFDRGRCINGTCYCEEGFTGEDCGKPTCPHACHTQGRCEEGQCVCDEGFAGVDCSEKRCPADCHNRGRCVDGRCECDDGFTGADCGELKCPNGCSGHGRCVNGQCVCDEGYTGEDCSQLRCPNDCHSRGRCVEGKCVCEQGFKGYDCSDMSCPNDCHQHGRCVNGMCVCDDGYTGEDCRDRQCPRDCSNRGLCVDGQCVCEDGFTGPDCAELSCPNDCHGQGRCVNGQCVCHEGFMGKDCKEQRCPSDCHGQGRCVDGQCICHEGFTGLDCGQHSCPSDCNNLGQCVSGRCICNEGYSGEDCSEVSPPKDLVVTEVTEETVNLAWDNEMRVTEYLVVYTPTHEGGLEMQFRVPGDQTSTIIQELEPGVEYFIRVFAILENKKSIPVSARVATYLPAPEGLKFKSIKETSVEVEWDPLDIAFETWEIIFRNMNKEDEGEITKSLRRPETSYRQTGLAPGQEYEISLHIVKNNTRGPGLKRVTTTRLDAPSQIEVKDVTDTTALITWFKPLAEIDGIELTYGIKDVPGDRTTIDLTEDENQYSIGNLKPDTEYEVSLISRRGDMSSNPAKETFTTGLDAPRNLRRVSQTDNSITLEWRNGKAAIDSYRIKYAPISGGDHAEVDVPKSQQATTKTTLTGLRPGTEYGIGVSAVKEDKESNPATINAATELDTPKDLQVSETAETSLTLLWKTPLAKFDRYRLNYSLPTGQWVGVQLPRNTTSYVLRGLEPGQEYNVLLTAEKGRHKSKPARVKASTEQAPELENLTVTEVGWDGLRLNWTAADQAYEHFIIQVQEANKVEAARNLTVPGSLRAVDIPGLKAATPYTVSIYGVIQGYRTPVLSAEASTGETPNLGEVVVAEVGWDALKLNWTAPEGAYEYFFIQVQEADTVEAAQNLTVPGGLRSTDLPGLKAATHYTITIRGVTQDFSTTPLSVEVLTEEVPDMGNLTVTEVSWDALRLNWTTPDGTYDQFTIQVQEADQVEEAHNLTVPGSLRSMEIPGLRAGTPYTVTLHGEVRGHSTRPLAVEVVTEDLPQLGDLAVSEVGWDGLRLNWTAADNAYEHFVIQVQEVNKVEAAQNLTLPGSLRAVDIPGLEAATPYRVSIYGVIRGYRTPVLSAEASTAKEPEIGNLNVSDITPESFNLSWMATDGIFETFTIEIIDSNRLLETVEYNISGAERTAHISGLPPSTDFIVYLSGLAPSIRTKTISATATTEALPLLENLTISDINPYGFTVSWMASENAFDSFLVTVVDSGKLLDPQEFTLSGTQRKLELRGLITGIGYEVMVSGFTQGHQTKPLRAEIVTEAEPEVDNLLVSDATPDGFRLSWTADEGVFDNFVLKIRDTKKQSEPLEITLLAPERTRDITGLREATEYEIELYGISKGRRSQTVSAIATTAMGSPKEVIFSDITENSATVSWRAPTAQVESFRITYVPITGGTPSMVTVDGTKTQTRLVKLIPGVEYLVSIIAMKGFEESEPVSGSFTTALDGPSGLVTANITDSEALARWQPAIATVDSYVISYTGEKVPEITRTVSGNTVEYALTDLEPATEYTLRIFAEKGPQKSSTITAKFTTDLDSPRDLTATEVQSETALLTWRPPRASVTGYLLVYESVDGTVKEVIVGPDTTSYSLADLSPSTHYTAKIQALNGPLRSNMIQTIFTTIGLLYPFPKDCSQAMLNGDTTSGLYTIYLNGDKAEALEVFCDMTSDGGGWIVFLRRKNGRENFYQNWKAYAAGFGDRREEFWLGLDNLNKITAQGQYELRVDLRDHGETAFAVYDKFSVGDAKTRYKLKVEGYSGTAGDSMAYHNGRSFSTFDKDTDSAITNCALSYKGAFWYRNCHRVNLMGRYGDNNHSQGVNWFHWKGHEHSIQFAEMKLRPSNFRNLEGRRKRA.

An N-terminal signal peptide occupies residues Met-1–Gly-22. Asn-38 carries an N-linked (GlcNAc...) asparagine glycan. Phosphoserine is present on residues Ser-65 and Ser-70. Phosphoserine; by FAM20C is present on Ser-72. A glycan (O-linked (Xyl...) (chondroitin sulfate) serine) is linked at Ser-72. Residues Asp-118–Gly-145 adopt a coiled-coil conformation. Residues Asn-166 and Asn-184 are each glycosylated (N-linked (GlcNAc...) asparagine). The region spanning Cys-174–Ser-186 is the EGF-like 1; incomplete domain. 14 consecutive EGF-like domains span residues Ser-186–Ser-217, Ser-217–Ser-248, Ser-248–Asn-280, Asn-280–Ser-311, Ser-311–Gly-342, Gly-342–Ser-373, Ser-373–Gly-404, Gly-404–Ser-435, Ser-435–Ser-466, Ser-466–Arg-497, Arg-497–Ala-528, Ala-528–Lys-559, Lys-559–Gly-590, and Gly-590–Ser-621. Disulfide bonds link Cys-190–Cys-200, Cys-194–Cys-205, Cys-207–Cys-216, Cys-221–Cys-231, Cys-225–Cys-236, Cys-238–Cys-247, Cys-252–Cys-263, Cys-256–Cys-268, Cys-270–Cys-279, Cys-284–Cys-294, Cys-288–Cys-299, Cys-301–Cys-310, Cys-315–Cys-325, Cys-319–Cys-330, Cys-332–Cys-341, Cys-346–Cys-356, Cys-350–Cys-361, Cys-363–Cys-372, Cys-377–Cys-387, Cys-381–Cys-392, Cys-394–Cys-403, Cys-408–Cys-418, Cys-412–Cys-423, Cys-425–Cys-434, Cys-439–Cys-449, Cys-443–Cys-454, Cys-456–Cys-465, Cys-470–Cys-480, Cys-474–Cys-485, Cys-487–Cys-496, Cys-501–Cys-511, Cys-505–Cys-516, Cys-518–Cys-527, Cys-532–Cys-542, Cys-536–Cys-547, Cys-549–Cys-558, Cys-563–Cys-573, Cys-567–Cys-578, Cys-580–Cys-589, Cys-594–Cys-604, Cys-598–Cys-609, and Cys-611–Cys-620. An N-linked (GlcNAc...) asparagine glycan is attached at Asn-327. Fibronectin type-III domains follow at residues Pro-625–Pro-715, Glu-716–Asp-804, Ala-805–Asp-894, Ala-895–Asp-990, Leu-991–Pro-1075, Glu-1076–Thr-1165, Asn-1167–Val-1256, Asp-1258–Leu-1350, Gly-1351–Pro-1439, Glu-1440–Leu-1531, Glu-1533–Pro-1621, Glu-1622–Gly-1711, Ser-1712–Gly-1801, Pro-1802–Asp-1888, and Ser-1889–Leu-1977. Asn-788 carries an N-linked (GlcNAc...) asparagine glycan. Thr-905 bears the Phosphothreonine mark. N-linked (GlcNAc...) asparagine glycans are attached at residues Asn-1018, Asn-1034, Asn-1079, Asn-1093, Asn-1119, Asn-1184, Asn-1210, Asn-1261, Asn-1275, Asn-1301, Asn-1366, Asn-1392, Asn-1445, Asn-1455, Asn-1485, and Asn-1534. Residue Asn-1809 is glycosylated (N-linked (GlcNAc...) asparagine). The region spanning Gly-1975 to Asn-2190 is the Fibrinogen C-terminal domain. Asn-2162 carries N-linked (GlcNAc...) asparagine glycosylation.

It belongs to the tenascin family. As to quaternary structure, homohexamer; disulfide-linked. A homotrimer may be formed in the triple coiled-coil region and may be stabilized by disulfide rings at both ends. Two of such half-hexabrachions may be disulfide linked within the central globule. Interacts with CSPG4. Interacts (via the 3rd fibronectin type-III domain) with integrin ITGA9:ITGB1. In terms of tissue distribution, detected in fibroblasts (at protein level).

The protein resides in the secreted. It localises to the extracellular space. It is found in the extracellular matrix. Functionally, extracellular matrix protein implicated in guidance of migrating neurons as well as axons during development, synaptic plasticity as well as neuronal regeneration. Promotes neurite outgrowth from cortical neurons grown on a monolayer of astrocytes. Ligand for integrins alpha-8/beta-1, alpha-9/beta-1, alpha-V/beta-3 and alpha-V/beta-6. In tumors, stimulates angiogenesis by elongation, migration and sprouting of endothelial cells. This Homo sapiens (Human) protein is Tenascin (TNC).